We begin with the raw amino-acid sequence, 197 residues long: Probable nicotinate-nucleotide adenylyltransferase (197 aa).

It belongs to the NadD family.

The catalysed reaction is nicotinate beta-D-ribonucleotide + ATP + H(+) = deamido-NAD(+) + diphosphate. It participates in cofactor biosynthesis; NAD(+) biosynthesis; deamido-NAD(+) from nicotinate D-ribonucleotide: step 1/1. Functionally, catalyzes the reversible adenylation of nicotinate mononucleotide (NaMN) to nicotinic acid adenine dinucleotide (NaAD). The sequence is that of Probable nicotinate-nucleotide adenylyltransferase from Bordetella avium (strain 197N).